Reading from the N-terminus, the 3268-residue chain is E3 ubiquitin-protein ligase TOM1 (3268 aa).

At Ser1890 the chain carries Phosphoserine. Disordered stretches follow at residues Val1941–Ala2023 and Gly2038–Ser2083. A compositionally biased stretch (acidic residues) spans Phe1942–Asp1955. Positions Ser1967–Asp1976 are enriched in polar residues. 3 stretches are compositionally biased toward acidic residues: residues Thr1978–Asp1988, Asp2042–Trp2053, and Ser2063–Pro2074. Phosphothreonine is present on Thr2096. Phosphoserine is present on residues Ser2119, Ser2376, Ser2406, and Ser2418. The segment covering Asp2416–Asn2426 has biased composition (acidic residues). The interval Asp2416–Lys2443 is disordered. An HECT domain is found at Thr2932–Ala3268. Cys3235 serves as the catalytic Glycyl thioester intermediate.

Belongs to the UPL family. TOM1/PTR1 subfamily. As to quaternary structure, interacts with the ADA3/NGG1 subunit of the SAGA complex. Interacts with KRR1.

It localises to the nucleus. The protein resides in the nucleolus. The enzyme catalyses S-ubiquitinyl-[E2 ubiquitin-conjugating enzyme]-L-cysteine + [acceptor protein]-L-lysine = [E2 ubiquitin-conjugating enzyme]-L-cysteine + N(6)-ubiquitinyl-[acceptor protein]-L-lysine.. Its pathway is protein modification; protein ubiquitination. Its function is as follows. Probable ubiquitin ligase protein involved in many cellular processes, such as transcription regulation, maintenance of nuclear structure, cell cycle, mRNA export and rRNA maturation. E3 ubiquitin ligase proteins mediate ubiquitination and subsequent proteasomal degradation of target proteins. Involved in transcription regulation by interacting, and probably mediating, ubiquitination of some subunit of the SAGA complex. Required for SPT7 ubiquitination. Participates in mRNA export from the nucleus by regulating the transport of hnRNP proteins. Required for the shuttling of hnRNP protein NAB2, probably by mediating ubiquitination of a protein associated with NAB2. Also required for full induction of the general stress and heat-shock responses. Involved in 18S rRNA maturation by affecting several early steps in the rRNA processing pathway. This Saccharomyces cerevisiae (strain ATCC 204508 / S288c) (Baker's yeast) protein is E3 ubiquitin-protein ligase TOM1 (TOM1).